The primary structure comprises 208 residues: FMN-dependent NADH:quinone oxidoreductase (208 aa).

Residues 17–19 (SNS), 99–102 (MWNL), and 143–146 (SRGG) contribute to the FMN site.

Belongs to the azoreductase type 1 family. As to quaternary structure, homodimer. The cofactor is FMN.

The enzyme catalyses 2 a quinone + NADH + H(+) = 2 a 1,4-benzosemiquinone + NAD(+). It catalyses the reaction N,N-dimethyl-1,4-phenylenediamine + anthranilate + 2 NAD(+) = 2-(4-dimethylaminophenyl)diazenylbenzoate + 2 NADH + 2 H(+). In terms of biological role, quinone reductase that provides resistance to thiol-specific stress caused by electrophilic quinones. Also exhibits azoreductase activity. Catalyzes the reductive cleavage of the azo bond in aromatic azo compounds to the corresponding amines. The protein is FMN-dependent NADH:quinone oxidoreductase of Staphylococcus carnosus (strain TM300).